The sequence spans 115 residues: Small ribosomal subunit protein uS17 (115 aa).

This sequence belongs to the universal ribosomal protein uS17 family. In terms of assembly, part of the 30S ribosomal subunit.

Functionally, one of the primary rRNA binding proteins, it binds specifically to the 5'-end of 16S ribosomal RNA. In Granulibacter bethesdensis (strain ATCC BAA-1260 / CGDNIH1), this protein is Small ribosomal subunit protein uS17.